Consider the following 458-residue polypeptide: Photosystem II CP43 reaction center protein (458 aa).

5 consecutive transmembrane segments (helical) span residues 54–78, 119–140, 163–185, 240–260, and 276–297; these read LFEV…PHLA, LRGP…KDKN, KAMF…RVIT, RPFN…LSYS, and WFNN…ASQA. Glu352 contacts [CaMn4O5] cluster. The helical transmembrane segment at 432-456 threads the bilayer; sequence RARAAAAGFEKGIDRKTEPVLSMSD.

The protein belongs to the PsbB/PsbC family. PsbC subfamily. In terms of assembly, PSII is composed of 1 copy each of membrane proteins PsbA, PsbB, PsbC, PsbD, PsbE, PsbF, PsbH, PsbI, PsbJ, PsbK, PsbL, PsbM, PsbT, PsbX, PsbY, PsbZ, Psb30/Ycf12, peripheral proteins PsbO, CyanoQ (PsbQ), PsbU, PsbV and a large number of cofactors. It forms dimeric complexes. Binds multiple chlorophylls and provides some of the ligands for the Ca-4Mn-5O cluster of the oxygen-evolving complex. It may also provide a ligand for a Cl- that is required for oxygen evolution. PSII binds additional chlorophylls, carotenoids and specific lipids. serves as cofactor.

The protein localises to the cellular thylakoid membrane. In terms of biological role, one of the components of the core complex of photosystem II (PSII). It binds chlorophyll and helps catalyze the primary light-induced photochemical processes of PSII. PSII is a light-driven water:plastoquinone oxidoreductase, using light energy to abstract electrons from H(2)O, generating O(2) and a proton gradient subsequently used for ATP formation. This is Photosystem II CP43 reaction center protein from Prochlorothrix hollandica.